The following is a 212-amino-acid chain: Large ribosomal subunit protein uL3 (212 aa).

At glutamine 152 the chain carries N5-methylglutamine.

It belongs to the universal ribosomal protein uL3 family. In terms of assembly, part of the 50S ribosomal subunit. Forms a cluster with proteins L14 and L19. Post-translationally, methylated by PrmB.

Its function is as follows. One of the primary rRNA binding proteins, it binds directly near the 3'-end of the 23S rRNA, where it nucleates assembly of the 50S subunit. In Chromohalobacter salexigens (strain ATCC BAA-138 / DSM 3043 / CIP 106854 / NCIMB 13768 / 1H11), this protein is Large ribosomal subunit protein uL3.